The primary structure comprises 189 residues: Small ribosomal subunit protein uS5 (189 aa).

The region spanning 22 to 85 (FVDKLVAINR…ESAKRDLIFV (64 aa)) is the S5 DRBM domain.

The protein belongs to the universal ribosomal protein uS5 family. Part of the 30S ribosomal subunit. Contacts proteins S4 and S8.

Its function is as follows. With S4 and S12 plays an important role in translational accuracy. Located at the back of the 30S subunit body where it stabilizes the conformation of the head with respect to the body. This chain is Small ribosomal subunit protein uS5, found in Agrobacterium fabrum (strain C58 / ATCC 33970) (Agrobacterium tumefaciens (strain C58)).